Consider the following 70-residue polypeptide: NAD(P)H-quinone oxidoreductase subunit O (70 aa).

This sequence belongs to the complex I NdhO subunit family. NDH-1 can be composed of about 15 different subunits; different subcomplexes with different compositions have been identified which probably have different functions.

It localises to the cellular thylakoid membrane. It carries out the reaction a plastoquinone + NADH + (n+1) H(+)(in) = a plastoquinol + NAD(+) + n H(+)(out). The enzyme catalyses a plastoquinone + NADPH + (n+1) H(+)(in) = a plastoquinol + NADP(+) + n H(+)(out). Its function is as follows. NDH-1 shuttles electrons from an unknown electron donor, via FMN and iron-sulfur (Fe-S) centers, to quinones in the respiratory and/or the photosynthetic chain. The immediate electron acceptor for the enzyme in this species is believed to be plastoquinone. Couples the redox reaction to proton translocation, and thus conserves the redox energy in a proton gradient. Cyanobacterial NDH-1 also plays a role in inorganic carbon-concentration. This chain is NAD(P)H-quinone oxidoreductase subunit O, found in Trichormus variabilis (strain ATCC 29413 / PCC 7937) (Anabaena variabilis).